We begin with the raw amino-acid sequence, 64 residues long: Large ribosomal subunit protein bL33c (64 aa).

The protein belongs to the bacterial ribosomal protein bL33 family.

Its subcellular location is the plastid. The protein resides in the cyanelle. In Cyanophora paradoxa, this protein is Large ribosomal subunit protein bL33c (rpl33).